The following is a 210-amino-acid chain: Orotate phosphoribosyltransferase (210 aa).

5-phospho-alpha-D-ribose 1-diphosphate contacts are provided by residues arginine 96, lysine 100, histidine 102, and 122–130; that span reads DDLISTGGS. Serine 126 serves as a coordination point for orotate.

It belongs to the purine/pyrimidine phosphoribosyltransferase family. PyrE subfamily. As to quaternary structure, homodimer. The cofactor is Mg(2+).

It catalyses the reaction orotidine 5'-phosphate + diphosphate = orotate + 5-phospho-alpha-D-ribose 1-diphosphate. Its pathway is pyrimidine metabolism; UMP biosynthesis via de novo pathway; UMP from orotate: step 1/2. Functionally, catalyzes the transfer of a ribosyl phosphate group from 5-phosphoribose 1-diphosphate to orotate, leading to the formation of orotidine monophosphate (OMP). The sequence is that of Orotate phosphoribosyltransferase from Levilactobacillus brevis (strain ATCC 367 / BCRC 12310 / CIP 105137 / JCM 1170 / LMG 11437 / NCIMB 947 / NCTC 947) (Lactobacillus brevis).